Reading from the N-terminus, the 60-residue chain is Large ribosomal subunit protein uL30 (60 aa).

It belongs to the universal ribosomal protein uL30 family. As to quaternary structure, part of the 50S ribosomal subunit.

The sequence is that of Large ribosomal subunit protein uL30 from Albidiferax ferrireducens (strain ATCC BAA-621 / DSM 15236 / T118) (Rhodoferax ferrireducens).